Here is a 65-residue protein sequence, read N- to C-terminus: Photosystem II reaction center protein J (65 aa).

Positions Met1–Pro17 are enriched in basic and acidic residues. A disordered region spans residues Met1 to Thr20. The helical transmembrane segment at Leu36 to Phe56 threads the bilayer.

The protein belongs to the PsbJ family. As to quaternary structure, PSII is composed of 1 copy each of membrane proteins PsbA, PsbB, PsbC, PsbD, PsbE, PsbF, PsbH, PsbI, PsbJ, PsbK, PsbL, PsbM, PsbT, PsbX, PsbY, Psb30/Ycf12, peripheral proteins PsbO, CyanoQ (PsbQ), PsbU, PsbV and a large number of cofactors. It forms dimeric complexes.

The protein localises to the cellular thylakoid membrane. Its function is as follows. One of the components of the core complex of photosystem II (PSII). PSII is a light-driven water:plastoquinone oxidoreductase that uses light energy to abstract electrons from H(2)O, generating O(2) and a proton gradient subsequently used for ATP formation. It consists of a core antenna complex that captures photons, and an electron transfer chain that converts photonic excitation into a charge separation. This chain is Photosystem II reaction center protein J, found in Prochlorococcus marinus (strain MIT 9303).